The following is a 400-amino-acid chain: Axin-like protein 1 (400 aa).

Residues 4 to 132 (RSKFSIDRVL…TTTADVNTTW (129 aa)) enclose the RGS domain. Disordered stretches follow at residues 190-233 (QETK…TLKV) and 278-306 (GTLERPNRLFTGTNNGFSTLQPKRRGSEA). Basic and acidic residues predominate over residues 194–210 (NSSETEEHAESPRKEKS). Positions 287–298 (FTGTNNGFSTLQ) are enriched in polar residues. The region spanning 305–392 (EAPKMTVELR…RITAICRMCP (88 aa)) is the DIX domain.

In terms of assembly, interacts with bar-1, dsh-2, gsk-3, and mig-5.

Works in parallel with pry-1 in negatively regulating bar-1 signaling in vulval precursor cells and Q neuroblasts. Shown to have a role in excretory cell development. The chain is Axin-like protein 1 from Caenorhabditis elegans.